A 2293-amino-acid chain; its full sequence is G-protein coupled receptor 179 (2293 aa).

The signal sequence occupies residues 1–27 (MGARAVVISSLAWGLLSCCFLCSGALG). The segment at 62 to 245 (FLYSGDVQRL…CHEGQLRPGW (184 aa)) is cache-like region. N75 carries an N-linked (GlcNAc...) asparagine glycan. A disulfide bridge links C76 with C236. N298 carries N-linked (GlcNAc...) asparagine glycosylation. Helical transmembrane passes span 383–403 (AVLACQACCMLAVFLSMLVAY), 416–436 (IVLLETILFGSLLLYFPVFIL), 445–465 (CVALRWVRLLGFAVVYGTIIL), 494–514 (LGQLLLLVLGFLVVWTAGALE), 544–564 (YIMVVAEMLLLCWGSFLCYAT), 585–602 (LLLSTAFHTARFVLVPSL), and 608–628 (LLLFFLHTHSTVTATLALIFI). C445 and C537 form a disulfide bridge. Residue N661 is glycosylated (N-linked (GlcNAc...) asparagine). The segment at 733–812 (QHSRDSGSLG…GRESLADGPP (80 aa)) is disordered. Residues 738 to 759 (SGSLGLGSLPGSSRRRLLSSSL) show a composition bias toward low complexity. Positions 773–782 (STYDHHREHN) are enriched in basic and acidic residues. N823 is a glycosylation site (N-linked (GlcNAc...) asparagine). Disordered stretches follow at residues 872 to 935 (EERK…HPPI), 1046 to 1235 (GTGE…NPAL), 1275 to 1294 (ERTEGGSLEKKPSRQVLSRS), 1326 to 1345 (EAVCPWESPDSGGLSPQLVH), 1388 to 1411 (GTSTQRVQELPEERQKSPKKATFW), 1479 to 1560 (ELAG…HGGS), 1578 to 1770 (ATLS…VCPW), 1792 to 1828 (TVGKGLEREPGCEPERQRRQNLEEAGLPFQEEGTSKG), 1844 to 1882 (WKPPAQVPKVSDLPLSTVGQGVEGQSLEASDRASEKGEL), 1924 to 2051 (SSSH…GSEK), and 2212 to 2293 (FLPE…WDCE). A compositionally biased stretch (polar residues) spans 1080–1089 (LKTPLQQGSV). Basic and acidic residues-rich tracts occupy residues 1105–1123 (TYKEKDGGEGTPETEKGKP), 1173–1186 (CQKEGSREQEDRNK), and 1275–1286 (ERTEGGSLEKKP). Basic and acidic residues-rich tracts occupy residues 1546 to 1555 (ASSKAGEKLL) and 1597 to 1632 (RTSEHPSKGEVHKDEEKMPGRARIKAQEEAEGRIQK). Residues 1644-1663 (PGSTPQRDTEKAQASLQRQG) show a composition bias toward polar residues. Composition is skewed to basic and acidic residues over residues 1682–1698 (GEERTIGAEASEARPND) and 1717–1728 (KKSERLGSEKEV). Residues 1737–1747 (PGDSSQQPDTP) are compositionally biased toward polar residues. Composition is skewed to basic and acidic residues over residues 1748–1761 (NTEKLKDELQEHGS), 1796–1813 (GLEREPGCEPERQRRQNL), and 1872–1882 (ASDRASEKGEL). Residues 1937-1948 (RVSSQPLVSTGD) show a composition bias toward polar residues. Residues 1979-2007 (TETEMSRQDEKEKSQEEKERAPETRDHEG) are compositionally biased toward basic and acidic residues. Residues 2283–2293 (SPPPDYPWDCE) are compositionally biased toward pro residues.

The protein belongs to the G-protein coupled receptor 3 family. As to quaternary structure, homodimer. Associates with the R7 group RGS-GNB5 complexes, composed of an R7 group RGS subunit (RGS6, RGS7, RGS9 or RGS11) and GNB5, promoting their localization to the cell membrane and regulating the GTPase activator activity of R7 RGS proteins. Interacts with TRPM1. Interacts with GRM6. Interacts with EGFLAM; transsynaptic interaction is required for synaptic organization of photoreceptor cells.

The protein resides in the cell membrane. The protein localises to the postsynaptic cell membrane. It is found in the cell projection. It localises to the dendrite. Its function is as follows. Orphan receptor involved in vision. Required for signal transduction through retinal depolarizing bipolar cells. Acts as an atypical G-protein coupled receptor that recruits and regulates the R7 group RGS-GNB5 complexes instead of activating G proteins: promotes the GTPase activator activity of R7 RGS proteins, increasing the GTPase activity of G protein alpha subunits, thereby driving them into their inactive GDP-bound form. Associates with components of metabotropic signaling cascade in retina ON-bipolar neurons, such as TRPM1 and GRM6: may control the ability of the GRM6 cascade to gate TRPM1. This is G-protein coupled receptor 179 from Mus musculus (Mouse).